Consider the following 40-residue polypeptide: Photosystem II reaction center protein J (40 aa).

Residues Leu10–Phe30 traverse the membrane as a helical segment.

Belongs to the PsbJ family. PSII is composed of 1 copy each of membrane proteins PsbA, PsbB, PsbC, PsbD, PsbE, PsbF, PsbH, PsbI, PsbJ, PsbK, PsbL, PsbM, PsbT, PsbX, PsbY, PsbZ, Psb30/Ycf12, at least 3 peripheral proteins of the oxygen-evolving complex and a large number of cofactors. It forms dimeric complexes.

The protein resides in the plastid membrane. Its function is as follows. One of the components of the core complex of photosystem II (PSII). PSII is a light-driven water:plastoquinone oxidoreductase that uses light energy to abstract electrons from H(2)O, generating O(2) and a proton gradient subsequently used for ATP formation. It consists of a core antenna complex that captures photons, and an electron transfer chain that converts photonic excitation into a charge separation. The protein is Photosystem II reaction center protein J of Cuscuta exaltata (Tall dodder).